Here is a 100-residue protein sequence, read N- to C-terminus: Large ribosomal subunit protein uL23 (100 aa).

It belongs to the universal ribosomal protein uL23 family. In terms of assembly, part of the 50S ribosomal subunit. Contacts protein L29, and trigger factor when it is bound to the ribosome.

Its function is as follows. One of the early assembly proteins it binds 23S rRNA. One of the proteins that surrounds the polypeptide exit tunnel on the outside of the ribosome. Forms the main docking site for trigger factor binding to the ribosome. The protein is Large ribosomal subunit protein uL23 of Vibrio cholerae serotype O1 (strain ATCC 39541 / Classical Ogawa 395 / O395).